The following is a 191-amino-acid chain: Holliday junction branch migration complex subunit RuvA (191 aa).

The tract at residues 1–64 is domain I; it reads MIRGVRGTLV…EDELALYGFA (64 aa). Residues 65 to 136 are domain II; the sequence is TEAELELFLS…ELRGRLPALT (72 aa). The segment at 136 to 139 is flexible linker; the sequence is TEVQ. The segment at 140–191 is domain III; the sequence is AGEPIDQELVAALQALGYTAQEARQAATHPEVRRAPSLEERIVAALRQLAPP.

It belongs to the RuvA family. As to quaternary structure, homotetramer. Forms an RuvA(8)-RuvB(12)-Holliday junction (HJ) complex. HJ DNA is sandwiched between 2 RuvA tetramers; dsDNA enters through RuvA and exits via RuvB. An RuvB hexamer assembles on each DNA strand where it exits the tetramer. Each RuvB hexamer is contacted by two RuvA subunits (via domain III) on 2 adjacent RuvB subunits; this complex drives branch migration. In the full resolvosome a probable DNA-RuvA(4)-RuvB(12)-RuvC(2) complex forms which resolves the HJ.

It localises to the cytoplasm. Functionally, the RuvA-RuvB-RuvC complex processes Holliday junction (HJ) DNA during genetic recombination and DNA repair, while the RuvA-RuvB complex plays an important role in the rescue of blocked DNA replication forks via replication fork reversal (RFR). RuvA specifically binds to HJ cruciform DNA, conferring on it an open structure. The RuvB hexamer acts as an ATP-dependent pump, pulling dsDNA into and through the RuvAB complex. HJ branch migration allows RuvC to scan DNA until it finds its consensus sequence, where it cleaves and resolves the cruciform DNA. The sequence is that of Holliday junction branch migration complex subunit RuvA from Thermomicrobium roseum (strain ATCC 27502 / DSM 5159 / P-2).